Here is a 479-residue protein sequence, read N- to C-terminus: Anaerobic nitric oxide reductase flavorubredoxin (479 aa).

The tract at residues L30–I210 is zinc metallo-hydrolase. Fe cation contacts are provided by H79, E81, D83, H147, D166, and H227. The 140-residue stretch at I254 to A393 folds into the Flavodoxin-like domain. FMN is bound by residues T260–N264 and A342–L369. Residues G423–L474 enclose the Rubredoxin-like domain. Residues C428, C431, C461, and C464 each coordinate Fe cation.

It in the N-terminal section; belongs to the zinc metallo-hydrolase group 3 family. In terms of assembly, homotetramer. Requires Fe cation as cofactor. The cofactor is FMN.

The protein localises to the cytoplasm. The protein operates within nitrogen metabolism; nitric oxide reduction. Functionally, anaerobic nitric oxide reductase; uses NADH to detoxify nitric oxide (NO), protecting several 4Fe-4S NO-sensitive enzymes. Has at least 2 reductase partners, only one of which (NorW, flavorubredoxin reductase) has been identified. NO probably binds to the di-iron center; electrons enter from the NorW at rubredoxin and are transferred sequentially to the FMN center and the di-iron center. Also able to function as an aerobic oxygen reductase. In Salmonella paratyphi A (strain ATCC 9150 / SARB42), this protein is Anaerobic nitric oxide reductase flavorubredoxin.